The primary structure comprises 694 residues: Proprotein convertase subtilisin/kexin type 9 (694 aa).

Residues 1–34 (MGTHCSAWLRWPLLPLLPPLLLLLLLLCPTGAGA) form the signal peptide. Residues 35 to 155 (QDEDGDYEEL…IEEDSFVFAQ (121 aa)) constitute a propeptide that is removed on maturation. Tyr-41 carries the sulfotyrosine modification. Phosphoserine is present on Ser-50. In terms of domain architecture, Peptidase S8 spans 158 to 470 (PWNLERIIPA…RTVWSAHSGP (313 aa)). Catalysis depends on charge relay system residues Asp-189 and His-229. Cystine bridges form between Cys-226–Cys-258 and Cys-326–Cys-361. Residue Ser-389 is the Charge relay system of the active site. The interval 453 to 694 (ETGGQLLCRT…RPSAKASWVQ (242 aa)) is C-terminal domain. Intrachain disulfides connect Cys-460-Cys-530, Cys-480-Cys-529, and Cys-489-Cys-512. The Cell attachment site motif lies at 499–501 (RGD). Asn-536 carries an N-linked (GlcNAc...) asparagine glycan. Disulfide bonds link Cys-537–Cys-604, Cys-555–Cys-603, Cys-565–Cys-591, Cys-611–Cys-682, Cys-629–Cys-681, and Cys-638–Cys-657. Ser-691 carries the post-translational modification Phosphoserine.

The protein belongs to the peptidase S8 family. In terms of assembly, monomer. Can self-associate to form dimers and higher multimers which may have increased LDLR degrading activity. The precursor protein but not the mature protein may form multimers. Interacts with APOB, VLDLR, LRP8/APOER2 and BACE1. The full-length immature form (pro-PCSK9) interacts with SCNN1A, SCNN1B and SCNN1G. The pro-PCSK9 form (via C-terminal domain) interacts with LDLR. Interacts (via the C-terminal domain) with ANXA2 (via repeat Annexin 1); the interaction inhibits the degradation of LDLR. Ca(2+) serves as cofactor. Post-translationally, cleavage by furin and PCSK5 generates a truncated inactive protein that is unable to induce LDLR degradation. In terms of processing, undergoes autocatalytic cleavage in the endoplasmic reticulum to release the propeptide from the N-terminus and the cleavage of the propeptide is strictly required for its maturation and activation. The cleaved propeptide however remains associated with the catalytic domain through non-covalent interactions, preventing potential substrates from accessing its active site. As a result, it is secreted from cells as a propeptide-containing, enzymatically inactive protein. Phosphorylation protects the propeptide against proteolysis. As to expression, hepatocytes, kidney mesenchymal cells, intestinal ileum, colon epithelia and embryonic brain telencephalon neurons.

It localises to the cytoplasm. Its subcellular location is the secreted. The protein localises to the endosome. The protein resides in the lysosome. It is found in the cell surface. It localises to the endoplasmic reticulum. Its subcellular location is the golgi apparatus. Its activity is regulated as follows. Its proteolytic activity is autoinhibited by the non-covalent binding of the propeptide to the catalytic domain. Inhibited by EGTA. Functionally, crucial player in the regulation of plasma cholesterol homeostasis. Binds to low-density lipid receptor family members: low density lipoprotein receptor (LDLR), very low density lipoprotein receptor (VLDLR), apolipoprotein E receptor (LRP1/APOER) and apolipoprotein receptor 2 (LRP8/APOER2), and promotes their degradation in intracellular acidic compartments. Acts via a non-proteolytic mechanism to enhance the degradation of the hepatic LDLR through a clathrin LDLRAP1/ARH-mediated pathway. May prevent the recycling of LDLR from endosomes to the cell surface or direct it to lysosomes for degradation. Can induce ubiquitination of LDLR leading to its subsequent degradation. Inhibits intracellular degradation of APOB via the autophagosome/lysosome pathway in a LDLR-independent manner. Involved in the disposal of non-acetylated intermediates of BACE1 in the early secretory pathway. Inhibits epithelial Na(+) channel (ENaC)-mediated Na(+) absorption by reducing ENaC surface expression primarily by increasing its proteasomal degradation. Regulates neuronal apoptosis via modulation of LRP8/APOER2 levels and related anti-apoptotic signaling pathways. The chain is Proprotein convertase subtilisin/kexin type 9 (Pcsk9) from Mus musculus (Mouse).